We begin with the raw amino-acid sequence, 453 residues long: Trigger factor (453 aa).

The PPIase FKBP-type domain occupies glycine 171–leucine 256.

Belongs to the FKBP-type PPIase family. Tig subfamily.

The protein localises to the cytoplasm. The enzyme catalyses [protein]-peptidylproline (omega=180) = [protein]-peptidylproline (omega=0). In terms of biological role, involved in protein export. Acts as a chaperone by maintaining the newly synthesized protein in an open conformation. Functions as a peptidyl-prolyl cis-trans isomerase. This is Trigger factor from Nitrobacter winogradskyi (strain ATCC 25391 / DSM 10237 / CIP 104748 / NCIMB 11846 / Nb-255).